The sequence spans 121 residues: Phosphoribosyl-AMP cyclohydrolase (121 aa).

Asp76 is a Mg(2+) binding site. Zn(2+) is bound at residue Cys77. Mg(2+) is bound by residues Asp78 and Asp80. Residues Cys93 and Cys100 each contribute to the Zn(2+) site.

The protein belongs to the PRA-CH family. In terms of assembly, homodimer. Mg(2+) serves as cofactor. The cofactor is Zn(2+).

Its subcellular location is the cytoplasm. The catalysed reaction is 1-(5-phospho-beta-D-ribosyl)-5'-AMP + H2O = 1-(5-phospho-beta-D-ribosyl)-5-[(5-phospho-beta-D-ribosylamino)methylideneamino]imidazole-4-carboxamide. It functions in the pathway amino-acid biosynthesis; L-histidine biosynthesis; L-histidine from 5-phospho-alpha-D-ribose 1-diphosphate: step 3/9. In terms of biological role, catalyzes the hydrolysis of the adenine ring of phosphoribosyl-AMP. This is Phosphoribosyl-AMP cyclohydrolase from Paracoccus denitrificans (strain Pd 1222).